A 379-amino-acid chain; its full sequence is Chaperone protein DnaJ (379 aa).

The J domain occupies 4–69 (DLYETLGVQK…QKRAAYDRYG (66 aa)). The CR-type zinc finger occupies 137–215 (GKTAQIRVPT…CHGQGRVVEE (79 aa)). Positions 150, 153, 167, 170, 189, 192, 203, and 206 each coordinate Zn(2+). CXXCXGXG motif repeat units follow at residues 150–157 (CDVCTGTG), 167–174 (CGTCQGTG), 189–196 (CPTCGGRG), and 203–210 (CTKCHGQG).

It belongs to the DnaJ family. Homodimer. It depends on Zn(2+) as a cofactor.

It localises to the cytoplasm. Functionally, participates actively in the response to hyperosmotic and heat shock by preventing the aggregation of stress-denatured proteins and by disaggregating proteins, also in an autonomous, DnaK-independent fashion. Unfolded proteins bind initially to DnaJ; upon interaction with the DnaJ-bound protein, DnaK hydrolyzes its bound ATP, resulting in the formation of a stable complex. GrpE releases ADP from DnaK; ATP binding to DnaK triggers the release of the substrate protein, thus completing the reaction cycle. Several rounds of ATP-dependent interactions between DnaJ, DnaK and GrpE are required for fully efficient folding. Also involved, together with DnaK and GrpE, in the DNA replication of plasmids through activation of initiation proteins. This chain is Chaperone protein DnaJ, found in Rhizobium meliloti (strain 1021) (Ensifer meliloti).